An 87-amino-acid polypeptide reads, in one-letter code: Elastase inhibitor AFLEI (87 aa).

An N-terminal signal peptide occupies residues 1–19; that stretch reads MKFSLACLLALAGLQAALA. A disulfide bridge links cysteine 24 with cysteine 86.

The protein resides in the secreted. Its function is as follows. Elastase inhibitor. The chain is Elastase inhibitor AFLEI from Aspergillus fumigatus (strain CBS 144.89 / FGSC A1163 / CEA10) (Neosartorya fumigata).